A 735-amino-acid chain; its full sequence is Serine/threonine-protein kinase BRSK2 (735 aa).

The 252-residue stretch at 20–271 (YRLEKTLGKG…LEHIQKHIWY (252 aa)) folds into the Protein kinase domain. Residues 26–34 (LGKGQTGLV) and K49 contribute to the ATP site. D142 functions as the Proton acceptor in the catalytic mechanism. Position 175 is a phosphothreonine; by LKB1 (T175). T261 bears the Phosphothreonine; by PKA mark. S295 carries the phosphoserine modification. Positions 298-340 (DIDPDVLDSMHSLGCFRDRNKLLQDLLSEEENQEKMIYFLLLD) constitute a UBA domain. Residues 346-367 (PSHEDEDLPPRNEIDPPRKRVD) show a composition bias toward basic and acidic residues. Disordered stretches follow at residues 346-476 (PSHE…GVPW), 493-514 (FHRR…PESS), and 682-735 (KNGQ…REQP). A phosphoserine mark is found at S368, S383, S394, S413, A417, S424, and S428. Over residues 411-429 (SRSISGASSGLSTSPLSSP) the composition is skewed to low complexity. Pro residues predominate over residues 432–446 (TPHPSPRGSPLPTPK). A Phosphoserine modification is found at S456. 3 positions are modified to phosphothreonine: T460, T464, and T510. Phosphoserine occurs at positions 513 and 514.

Belongs to the protein kinase superfamily. CAMK Ser/Thr protein kinase family. SNF1 subfamily. In terms of assembly, interacts with FZR1, a regulatory subunit of the APC ubiquitin ligase complex. Interacts with COPS5. Interacts with PAK1. It depends on Mg(2+) as a cofactor. In terms of processing, may be phosphorylated at Thr-261 by PKA. Phosphorylated at Thr-175 by STK11/LKB1 in complex with STE20-related adapter-alpha (STRADA) pseudo kinase and CAB39. Not phosphorylated at Thr-175 by CaMKK2. In contrast, it is phosphorylated and activated by CaMKK1. May be inactivated via dephosphorylation of Thr-175 by PP2C. Post-translationally, polyubiquitinated by the APC complex in conjunction with FZR1, leading to its proteasomal degradation. Targeted for proteasomal degradation by interaction with COPS5. BRSK2 levels change during the cell cycle. BRSK2 levels are low at the G1/S boundary and gradually increase as cells progress into G2 phase. BRSK2 levels decrease rapidly at the end of mitosis.

The protein localises to the cytoplasm. It is found in the cytoskeleton. It localises to the microtubule organizing center. Its subcellular location is the centrosome. The protein resides in the perinuclear region. The protein localises to the endoplasmic reticulum. It carries out the reaction L-seryl-[protein] + ATP = O-phospho-L-seryl-[protein] + ADP + H(+). It catalyses the reaction L-threonyl-[protein] + ATP = O-phospho-L-threonyl-[protein] + ADP + H(+). The catalysed reaction is L-seryl-[tau protein] + ATP = O-phospho-L-seryl-[tau protein] + ADP + H(+). The enzyme catalyses L-threonyl-[tau protein] + ATP = O-phospho-L-threonyl-[tau protein] + ADP + H(+). Its activity is regulated as follows. Activated by phosphorylation on Thr-175 by STK11/LKB1. Functionally, serine/threonine-protein kinase that plays a key role in polarization of neurons and axonogenesis, cell cycle progress and insulin secretion. Phosphorylates CDK16, CDC25C, MAPT/TAU, PAK1 and WEE1. Following phosphorylation and activation by STK11/LKB1, acts as a key regulator of polarization of cortical neurons, probably by mediating phosphorylation of microtubule-associated proteins such as MAPT/TAU at 'Thr-523' and 'Ser-573'. Also regulates neuron polarization by mediating phosphorylation of WEE1 at 'Ser-642' in post-mitotic neurons, leading to down-regulate WEE1 activity in polarized neurons. Plays a role in the regulation of the mitotic cell cycle progress and the onset of mitosis. Plays a role in the regulation of insulin secretion in response to elevated glucose levels, probably via phosphorylation of CDK16 and PAK1. While BRSK2 phosphorylated at Thr-175 can inhibit insulin secretion, BRSK2 phosphorylated at Thr-261 can promote insulin secretion. Regulates reorganization of the actin cytoskeleton. May play a role in the apoptotic response triggered by endoplasmic reticulum (ER) stress. The polypeptide is Serine/threonine-protein kinase BRSK2 (Brsk2) (Rattus norvegicus (Rat)).